The chain runs to 348 residues: Fe-S cluster assembly protein DRE2 (348 aa).

An N-terminal SAM-like domain region spans residues 1–185 (MSGEKSSLLL…KKPESPRASV (185 aa)). Disordered regions lie at residues 128–148 (QTAP…SKSL) and 162–213 (KKAE…TASK). The tract at residues 186 to 241 (VAEDLDDGDELDGMNEDDSNSDELTASKSKFFDDVAGQDSADSIDEDDLVDDAEKS) is linker. Over residues 188-206 (EDLDDGDELDGMNEDDSNS) the composition is skewed to acidic residues. Residues cysteine 248, cysteine 259, cysteine 262, and cysteine 264 each contribute to the [2Fe-2S] cluster site. Residues 248–264 (CGKTKTRRRKACKDCTC) form a fe-S binding site A region. Residues cysteine 311, cysteine 314, cysteine 322, and cysteine 325 each coordinate [4Fe-4S] cluster. 2 short sequence motifs (cx2C motif) span residues 311-314 (CGSC) and 322-325 (CSGC). The tract at residues 311–325 (CGSCSLGDAFRCSGC) is fe-S binding site B.

It belongs to the anamorsin family. Monomer. Interacts with TAH18. Interacts with MIA40. The cofactor is [2Fe-2S] cluster. It depends on [4Fe-4S] cluster as a cofactor.

The protein resides in the cytoplasm. Its subcellular location is the mitochondrion intermembrane space. Its function is as follows. Component of the cytosolic iron-sulfur (Fe-S) protein assembly (CIA) machinery required for the maturation of extramitochondrial Fe-S proteins. Part of an electron transfer chain functioning in an early step of cytosolic Fe-S biogenesis, facilitating the de novo assembly of a [4Fe-4S] cluster on the scaffold complex CFD1-NBP35. Electrons are transferred to DRE2 from NADPH via the FAD- and FMN-containing protein TAH18. TAH18-DRE2 are also required for the assembly of the diferric tyrosyl radical cofactor of ribonucleotide reductase (RNR), probably by providing electrons for reduction during radical cofactor maturation in the catalytic small subunit RNR2. This Lachancea thermotolerans (strain ATCC 56472 / CBS 6340 / NRRL Y-8284) (Yeast) protein is Fe-S cluster assembly protein DRE2.